The chain runs to 71 residues: Small ribosomal subunit protein bS21 (71 aa).

It belongs to the bacterial ribosomal protein bS21 family.

The chain is Small ribosomal subunit protein bS21 from Photobacterium profundum (strain SS9).